The following is a 290-amino-acid chain: Fat storage-inducing transmembrane protein 1 (290 aa).

Residues Met1–Arg18 are Lumenal-facing. A helical transmembrane segment spans residues Thr19–Gly39. Residues Ser40–Arg54 lie on the Cytoplasmic side of the membrane. The chain crosses the membrane as a helical span at residues Leu55 to Asn75. The Lumenal portion of the chain corresponds to Pro76–Ser94. The chain crosses the membrane as a helical span at residues Ala95–Thr115. Residues Arg116–Ala141 lie on the Cytoplasmic side of the membrane. Residues Phe142 to Leu162 traverse the membrane as a helical segment. The Lumenal portion of the chain corresponds to His163 to Thr187. Residue His186 is part of the active site. The chain crosses the membrane as a helical span at residues Phe188–Leu208. Residues Ala209–Leu220 lie on the Cytoplasmic side of the membrane. Residues Val221–Ile241 form a helical membrane-spanning segment. Topologically, residues Tyr242–Lys249 are lumenal. His244 is a catalytic residue. A helical membrane pass occupies residues Val250 to Gln270. Over Pro271–Asn290 the chain is Cytoplasmic.

Belongs to the FIT family. FIT1 subfamily.

Its subcellular location is the endoplasmic reticulum membrane. Its function is as follows. Plays an important role in the formation of lipid droplets (LDs) which are storage organelles at the center of lipid and energy homeostasis. Directly binds to diacylglycerol (DAGs) and triacylglycerol. The polypeptide is Fat storage-inducing transmembrane protein 1 (Sus scrofa (Pig)).